The chain runs to 188 residues: Putative 3-methyladenine DNA glycosylase (188 aa).

The protein belongs to the DNA glycosylase MPG family.

This chain is Putative 3-methyladenine DNA glycosylase, found in Ehrlichia ruminantium (strain Gardel).